The chain runs to 195 residues: UPF0316 protein Pcar_2434 (195 aa).

3 helical membrane passes run 13 to 33 (LFLL…IGTL), 45 to 65 (WAGV…SQVM), and 71 to 91 (VWTY…GVLI).

It belongs to the UPF0316 family.

The protein resides in the cell membrane. The protein is UPF0316 protein Pcar_2434 of Syntrophotalea carbinolica (strain DSM 2380 / NBRC 103641 / GraBd1) (Pelobacter carbinolicus).